Consider the following 296-residue polypeptide: Large ribosomal subunit protein uL18A (296 aa).

Residues P251–S296 form a disordered region. Residues K255–R268 show a composition bias toward basic residues. Basic and acidic residues predominate over residues L271 to A281.

It belongs to the universal ribosomal protein uL18 family. Component of the large ribosomal subunit (LSU). Part of a LSU subcomplex, the 5S RNP which is composed of the 5S RNA, RPL5 and RPL11.

It localises to the cytoplasm. Its subcellular location is the nucleus. The protein localises to the nucleolus. Functionally, component of the ribosome, a large ribonucleoprotein complex responsible for the synthesis of proteins in the cell. The small ribosomal subunit (SSU) binds messenger RNAs (mRNAs) and translates the encoded message by selecting cognate aminoacyl-transfer RNA (tRNA) molecules. The large subunit (LSU) contains the ribosomal catalytic site termed the peptidyl transferase center (PTC), which catalyzes the formation of peptide bonds, thereby polymerizing the amino acids delivered by tRNAs into a polypeptide chain. The nascent polypeptides leave the ribosome through a tunnel in the LSU and interact with protein factors that function in enzymatic processing, targeting, and the membrane insertion of nascent chains at the exit of the ribosomal tunnel. As part of the 5S RNP/5S ribonucleoprotein particle it is an essential component of the LSU, required for its formation and the maturation of rRNAs. It also couples ribosome biogenesis to p53/TP53 activation. As part of the 5S RNP it accumulates in the nucleoplasm and inhibits MDM2, when ribosome biogenesis is perturbed, mediating the stabilization and the activation of TP53. This Xenopus laevis (African clawed frog) protein is Large ribosomal subunit protein uL18A (rpl5-a).